Reading from the N-terminus, the 377-residue chain is Opsin-2 (377 aa).

Over 1 to 57 (MNNQSENYYHGAQFEALKSAGAIEMLGDGLTGDDLAAIPEHWLSYPAPPASAHTALA) the chain is Extracellular. N3 is a glycosylation site (N-linked (GlcNAc...) asparagine). A helical membrane pass occupies residues 58–78 (LLYIFFTFAALVGNGMVIFIF). The Cytoplasmic segment spans residues 79-89 (STTKSLRTSSN). A helical membrane pass occupies residues 90–110 (FLVLNLAILDFIMMAKAPIFI). At 111–126 (YNSAMRGFAVGTVGCQ) the chain is on the extracellular side. C125 and C202 are oxidised to a cystine. A helical transmembrane segment spans residues 127–146 (IFALMGAYSGIGAGMTNACI). At 147–166 (AYDRHSTITRPLDGRLSEGK) the chain is on the cytoplasmic side. Residues 167 to 187 (VLLMVAFVWIYSTPWALLPLL) form a helical membrane-spanning segment. Over 188–214 (KIWGRYVPEGYLTSCSFDYLTNTFDTK) the chain is Extracellular. The chain crosses the membrane as a helical span at residues 215 to 235 (LFVACIFTCSYVFPMSLIIYF). Topologically, residues 236 to 283 (YSGIVKQVFAHEAALREQAKKMNVESLRANQGGSSESAEIRIAKAALT) are cytoplasmic. A helical transmembrane segment spans residues 284-304 (VCFLFVASWTPYGVMALIGAF). Residues 305 to 314 (GNQQLLTPGV) are Extracellular-facing. Residues 315–335 (TMIPAVACKAVACISPWVYAI) traverse the membrane as a helical segment. The Cytoplasmic segment spans residues 336–377 (RHPMYRQELQRRMPWLQIDEPDDTVSTATSNTTNSAPPAATA). Positions 355-377 (EPDDTVSTATSNTTNSAPPAATA) are disordered. Positions 361-377 (STATSNTTNSAPPAATA) are enriched in low complexity.

It belongs to the G-protein coupled receptor 1 family. Opsin subfamily. As to expression, in the retina, expression is essentially uniformly distributed, but a higher level is seen in the dorsal region of the retina and in the dorsal rim retinulae.

It is found in the membrane. Its function is as follows. Visual pigments are the light-absorbing molecules that mediate vision. They consist of an apoprotein, opsin, covalently linked to cis-retinal. May play a role in photoperiodic photoreception. This chain is Opsin-2 (OP2), found in Manduca sexta (Tobacco hawkmoth).